Here is a 215-residue protein sequence, read N- to C-terminus: Thiamine-phosphate synthase (215 aa).

Residues 43–47 (QFRDK) and Asn78 contribute to the 4-amino-2-methyl-5-(diphosphooxymethyl)pyrimidine site. Residues Asp79 and Asp98 each coordinate Mg(2+). Ser117 lines the 4-amino-2-methyl-5-(diphosphooxymethyl)pyrimidine pocket. Residue 143 to 145 (TNS) participates in 2-[(2R,5Z)-2-carboxy-4-methylthiazol-5(2H)-ylidene]ethyl phosphate binding. Position 146 (Lys146) interacts with 4-amino-2-methyl-5-(diphosphooxymethyl)pyrimidine. 2-[(2R,5Z)-2-carboxy-4-methylthiazol-5(2H)-ylidene]ethyl phosphate contacts are provided by residues Gly174 and 194–195 (IS).

This sequence belongs to the thiamine-phosphate synthase family. Requires Mg(2+) as cofactor.

It catalyses the reaction 2-[(2R,5Z)-2-carboxy-4-methylthiazol-5(2H)-ylidene]ethyl phosphate + 4-amino-2-methyl-5-(diphosphooxymethyl)pyrimidine + 2 H(+) = thiamine phosphate + CO2 + diphosphate. The catalysed reaction is 2-(2-carboxy-4-methylthiazol-5-yl)ethyl phosphate + 4-amino-2-methyl-5-(diphosphooxymethyl)pyrimidine + 2 H(+) = thiamine phosphate + CO2 + diphosphate. It carries out the reaction 4-methyl-5-(2-phosphooxyethyl)-thiazole + 4-amino-2-methyl-5-(diphosphooxymethyl)pyrimidine + H(+) = thiamine phosphate + diphosphate. It participates in cofactor biosynthesis; thiamine diphosphate biosynthesis; thiamine phosphate from 4-amino-2-methyl-5-diphosphomethylpyrimidine and 4-methyl-5-(2-phosphoethyl)-thiazole: step 1/1. In terms of biological role, condenses 4-methyl-5-(beta-hydroxyethyl)thiazole monophosphate (THZ-P) and 2-methyl-4-amino-5-hydroxymethyl pyrimidine pyrophosphate (HMP-PP) to form thiamine monophosphate (TMP). The sequence is that of Thiamine-phosphate synthase from Lactococcus lactis subsp. lactis (strain IL1403) (Streptococcus lactis).